We begin with the raw amino-acid sequence, 439 residues long: CBL-interacting serine/threonine-protein kinase 26 (439 aa).

The Protein kinase domain occupies 13-268 (YEVGKTLGQG…IPEVLGDAWF (256 aa)). ATP-binding positions include 19–27 (LGQGTFAKV) and K42. The active-site Proton acceptor is D136. Residues 154–183 (DFGLSALSRQVRGDGLLHTACGTPNYAAPE) are activation loop. A Phosphoserine modification is found at S158. T172 carries the post-translational modification Phosphothreonine. An NAF domain is found at 306 to 330 (EQPTSMNAFELISMSRALDLGNLFE). Residues 336–365 (KRETRFAAKGAANDLVQKIEEASKPLGFDI) form a PPI region.

It belongs to the protein kinase superfamily. CAMK Ser/Thr protein kinase family. SNF1 subfamily. Interacts with RBOHF (via N-terminus). It depends on Mn(2+) as a cofactor.

It is found in the cell membrane. It carries out the reaction L-seryl-[protein] + ATP = O-phospho-L-seryl-[protein] + ADP + H(+). The enzyme catalyses L-threonyl-[protein] + ATP = O-phospho-L-threonyl-[protein] + ADP + H(+). Its function is as follows. CIPK serine-threonine protein kinases interact with CBL proteins. Binding of a CBL protein to the regulatory NAF domain of CIPK protein lead to the activation of the kinase in a calcium-dependent manner. Involved in the calcium-dependent regulation of reactive oxygen species production by the NADPH oxidase RBOHF. The polypeptide is CBL-interacting serine/threonine-protein kinase 26 (CIPK26) (Arabidopsis thaliana (Mouse-ear cress)).